Consider the following 566-residue polypeptide: ALBINO3-like protein 3, mitochondrial (566 aa).

Residues 1–44 constitute a mitochondrion transit peptide; sequence MAFRRVLLSHLRRSHHTCSSLSPHHVSATTQPSIALALFQSRFF. The next 4 helical transmembrane spans lie at 139–159, 207–227, 249–269, and 301–321; these read WVVI…ILIL, LWVP…ITSI, LTEI…AGLH, and LLTC…LLYW. 4 TPR repeats span residues 386–419, 420–453, 465–498, and 507–540; these read PKEL…DPEY, LQAM…LLDT, IVAS…KEPD, and LDAL…DPSF. The disordered stretch occupies residues 547-566; that stretch reads CEEDDTIPTSSSSNSTSKTS. The span at 555–566 shows a compositional bias: low complexity; that stretch reads TSSSSNSTSKTS.

Belongs to the OXA1/ALB3/YidC (TC 2.A.9.2) family.

The protein resides in the mitochondrion inner membrane. Functionally, probably required for the insertion of integral membrane proteins into the mitochondrial inner membrane. The sequence is that of ALBINO3-like protein 3, mitochondrial (ALB3L3) from Arabidopsis thaliana (Mouse-ear cress).